The sequence spans 447 residues: Cellulosome-anchoring protein (447 aa).

Residues 1 to 29 (MKRIKRILAVLTIFALLATINAFTFVSLA) form the signal peptide. One can recognise a Cohesin domain in the interval 30–180 (QTNTIEIIIG…EIIEASAPEA (151 aa)). The tract at residues 30 to 180 (QTNTIEIIIG…EIIEASAPEA (151 aa)) is receptor binding site for duplicated segment of CipA. Positions 177-247 (APEATPTPGS…EHAPFLKGYP (71 aa)) are disordered. Residues 188–200 (AGSGAGGGTGSSG) show a composition bias toward gly residues. The segment covering 201–223 (SGQPSATPTPTATEKPSTTPKTT) has biased composition (low complexity). SLH domains follow at residues 216–280 (PSTT…AGKN), 281–344 (SSIT…EQGT), and 345–408 (DVKT…GAVL). In terms of domain architecture, SLH 4; truncated spans 409–429 (EFTDVPVNYWAYKDIAEGVIY).

It localises to the secreted. The protein resides in the cell wall. It is found in the S-layer. Functionally, anchors the cellulosome to the cell surface by binding the duplicated segment that is present at the C-terminal end of CipA. The polypeptide is Cellulosome-anchoring protein (ancA) (Acetivibrio thermocellus (strain ATCC 27405 / DSM 1237 / JCM 9322 / NBRC 103400 / NCIMB 10682 / NRRL B-4536 / VPI 7372) (Clostridium thermocellum)).